The sequence spans 93 residues: Large ribosomal subunit protein uL23 (93 aa).

It belongs to the universal ribosomal protein uL23 family. Part of the 50S ribosomal subunit. Contacts protein L29, and trigger factor when it is bound to the ribosome.

In terms of biological role, one of the early assembly proteins it binds 23S rRNA. One of the proteins that surrounds the polypeptide exit tunnel on the outside of the ribosome. Forms the main docking site for trigger factor binding to the ribosome. The sequence is that of Large ribosomal subunit protein uL23 from Natranaerobius thermophilus (strain ATCC BAA-1301 / DSM 18059 / JW/NM-WN-LF).